The sequence spans 237 residues: CDP-diacylglycerol--serine O-phosphatidyltransferase (237 aa).

Helical transmembrane passes span 3–23 (INPLYLFPNLFTASSIFLGMM), 25–45 (IFYASSYQFVMACWLVVASLI), 73–93 (VVAFGVAPSLITYFYVGYNFG), 95–115 (IGMAVSALFVIFGAIRLARFN), 124–144 (YSFIGIPIPAAAVLVVLCVLL), 150–170 (FLEGNTEKLFLGFIVLLGVLM), 184–204 (WNLKLFILVLIFLSLVFVRPL), and 207–227 (LSVFMGLYLIYGIIRWIFLMV).

This sequence belongs to the CDP-alcohol phosphatidyltransferase class-I family.

The protein localises to the cell membrane. It catalyses the reaction a CDP-1,2-diacyl-sn-glycerol + L-serine = a 1,2-diacyl-sn-glycero-3-phospho-L-serine + CMP + H(+). The sequence is that of CDP-diacylglycerol--serine O-phosphatidyltransferase (pssA) from Helicobacter pylori (strain J99 / ATCC 700824) (Campylobacter pylori J99).